Reading from the N-terminus, the 414-residue chain is Argininosuccinate synthase (414 aa).

ATP-binding positions include 15–23 and Ala-42; that span reads AYSGGLDTS. L-citrulline contacts are provided by Tyr-93 and Ser-98. Gly-123 is a binding site for ATP. 3 residues coordinate L-aspartate: Thr-125, Asn-129, and Asp-130. Asn-129 contributes to the L-citrulline binding site. Residues Arg-133, Ser-182, Ser-191, Glu-267, and Tyr-279 each contribute to the L-citrulline site.

Belongs to the argininosuccinate synthase family. Type 1 subfamily. As to quaternary structure, homotetramer.

The protein resides in the cytoplasm. The enzyme catalyses L-citrulline + L-aspartate + ATP = 2-(N(omega)-L-arginino)succinate + AMP + diphosphate + H(+). Its pathway is amino-acid biosynthesis; L-arginine biosynthesis; L-arginine from L-ornithine and carbamoyl phosphate: step 2/3. This chain is Argininosuccinate synthase, found in Deinococcus geothermalis (strain DSM 11300 / CIP 105573 / AG-3a).